We begin with the raw amino-acid sequence, 273 residues long: Eukaryotic translation initiation factor 3 subunit G-2 (273 aa).

Positions 193–271 constitute an RRM domain; sequence SAVRISNLSE…LILCVEWSKP (79 aa).

It belongs to the eIF-3 subunit G family. In terms of assembly, component of the eukaryotic translation initiation factor 3 (eIF-3) complex. The eIF-3 complex interacts with pix.

It is found in the cytoplasm. In terms of biological role, RNA-binding component of the eukaryotic translation initiation factor 3 (eIF-3) complex, which is involved in protein synthesis of a specialized repertoire of mRNAs and, together with other initiation factors, stimulates binding of mRNA and methionyl-tRNAi to the 40S ribosome. The eIF-3 complex specifically targets and initiates translation of a subset of mRNAs involved in cell proliferation. This subunit can bind 18S rRNA. This Drosophila melanogaster (Fruit fly) protein is Eukaryotic translation initiation factor 3 subunit G-2.